We begin with the raw amino-acid sequence, 201 residues long: Segregation and condensation protein B (201 aa).

This sequence belongs to the ScpB family. In terms of assembly, homodimer. Homodimerization may be required to stabilize the binding of ScpA to the Smc head domains. Component of a cohesin-like complex composed of ScpA, ScpB and the Smc homodimer, in which ScpA and ScpB bind to the head domain of Smc. The presence of the three proteins is required for the association of the complex with DNA.

It localises to the cytoplasm. Participates in chromosomal partition during cell division. May act via the formation of a condensin-like complex containing Smc and ScpA that pull DNA away from mid-cell into both cell halves. This Enterococcus faecalis (strain ATCC 700802 / V583) protein is Segregation and condensation protein B.